Consider the following 930-residue polypeptide: Isoleucine--tRNA ligase (930 aa).

Positions 57-67 (PYANGNIHVGH) match the 'HIGH' region motif. Glu-554 is a binding site for L-isoleucyl-5'-AMP. The short motif at 595–599 (KMSKS) is the 'KMSKS' region element. Lys-598 is a binding site for ATP. Residues Cys-888, Cys-891, Cys-908, and Cys-911 each coordinate Zn(2+).

This sequence belongs to the class-I aminoacyl-tRNA synthetase family. IleS type 1 subfamily. As to quaternary structure, monomer. Requires Zn(2+) as cofactor.

Its subcellular location is the cytoplasm. It catalyses the reaction tRNA(Ile) + L-isoleucine + ATP = L-isoleucyl-tRNA(Ile) + AMP + diphosphate. Catalyzes the attachment of isoleucine to tRNA(Ile). As IleRS can inadvertently accommodate and process structurally similar amino acids such as valine, to avoid such errors it has two additional distinct tRNA(Ile)-dependent editing activities. One activity is designated as 'pretransfer' editing and involves the hydrolysis of activated Val-AMP. The other activity is designated 'posttransfer' editing and involves deacylation of mischarged Val-tRNA(Ile). The polypeptide is Isoleucine--tRNA ligase (Streptococcus pneumoniae (strain Taiwan19F-14)).